We begin with the raw amino-acid sequence, 210 residues long: Dephospho-CoA kinase (210 aa).

Residues 4–202 enclose the DPCK domain; it reads WVGLTGGIGS…AFYSGIFASK (199 aa). Residue 12 to 17 participates in ATP binding; that stretch reads GSGKSA.

It belongs to the CoaE family.

Its subcellular location is the cytoplasm. The catalysed reaction is 3'-dephospho-CoA + ATP = ADP + CoA + H(+). It functions in the pathway cofactor biosynthesis; coenzyme A biosynthesis; CoA from (R)-pantothenate: step 5/5. Catalyzes the phosphorylation of the 3'-hydroxyl group of dephosphocoenzyme A to form coenzyme A. In Neisseria gonorrhoeae, this protein is Dephospho-CoA kinase.